A 156-amino-acid polypeptide reads, in one-letter code: Lipoprotein signal peptidase (156 aa).

Transmembrane regions (helical) follow at residues 52–72 (ILEG…IGIV) and 85–105 (FATA…DRIF). Catalysis depends on residues Asp111 and Asp129. The chain crosses the membrane as a helical span at residues 121-141 (NFPIFNVADSALCVGVGILFL).

It belongs to the peptidase A8 family.

It localises to the cell membrane. The catalysed reaction is Release of signal peptides from bacterial membrane prolipoproteins. Hydrolyzes -Xaa-Yaa-Zaa-|-(S,diacylglyceryl)Cys-, in which Xaa is hydrophobic (preferably Leu), and Yaa (Ala or Ser) and Zaa (Gly or Ala) have small, neutral side chains.. It functions in the pathway protein modification; lipoprotein biosynthesis (signal peptide cleavage). This protein specifically catalyzes the removal of signal peptides from prolipoproteins. This is Lipoprotein signal peptidase from Halalkalibacterium halodurans (strain ATCC BAA-125 / DSM 18197 / FERM 7344 / JCM 9153 / C-125) (Bacillus halodurans).